The chain runs to 245 residues: tRNA pseudouridine synthase A (245 aa).

Residue D52 is the Nucleophile of the active site. Residue Y111 coordinates substrate.

The protein belongs to the tRNA pseudouridine synthase TruA family. In terms of assembly, homodimer.

It catalyses the reaction uridine(38/39/40) in tRNA = pseudouridine(38/39/40) in tRNA. Functionally, formation of pseudouridine at positions 38, 39 and 40 in the anticodon stem and loop of transfer RNAs. The polypeptide is tRNA pseudouridine synthase A (Rickettsia rickettsii (strain Iowa)).